The chain runs to 741 residues: Double-stranded RNA-specific editase 1 (741 aa).

The disordered stretch occupies residues methionine 1–proline 79. Serine 26 is subject to Phosphoserine. A compositionally biased stretch (gly residues) spans proline 33–proline 49. A compositionally biased stretch (basic residues) spans serine 63–threonine 73. One can recognise a DRBM 1 domain in the interval leucine 78–glutamine 144. Interaction with substrate RNA stretches follow at residues leucine 83–glutamate 88 and valine 104–histidine 105. Position 149 is a phosphoserine (serine 149). In terms of domain architecture, DRBM 2 spans proline 231 to asparagine 298. 2 interaction with substrate RNA regions span residues valine 237–glutamate 242 and histidine 259. An A to I editase domain is found at serine 370–phenylalanine 737. Zn(2+) is bound at residue histidine 394. Catalysis depends on glutamate 396, which acts as the Proton donor. Residues arginine 400 and arginine 401 each coordinate 1D-myo-inositol hexakisphosphate. Zn(2+) is bound at residue cysteine 451. Positions arginine 486–glycine 518 are disordered. Residues aspartate 493 to glycine 503 show a composition bias toward polar residues. Cysteine 556 lines the Zn(2+) pocket. 1D-myo-inositol hexakisphosphate-binding residues include lysine 559, arginine 562, lysine 669, lysine 702, lysine 712, and lysine 730.

In terms of assembly, homodimer. Homodimerization is essential for its catalytic activity. Can form heterodimers with isoform 5 of ADAR/ADAR1. 1D-myo-inositol hexakisphosphate serves as cofactor. As to expression, highly expressed in brain and heart and at lower levels in placenta. Fair expression in lung, liver and kidney. Detected in brain, heart, kidney, lung and liver (at protein level). Highly expressed in hippocampus and colon. Expressed in pediatric astrocytomas and the protein has a decreased RNA-editing activity. The decrease in RNA editing correlates with the grade of malignancy of the tumors, with the high grade tumors showing lower editing is seen.

It is found in the nucleus. It localises to the nucleolus. It catalyses the reaction adenosine in double-stranded RNA + H2O + H(+) = inosine in double-stranded RNA + NH4(+). Functionally, catalyzes the hydrolytic deamination of adenosine to inosine in double-stranded RNA (dsRNA) referred to as A-to-I RNA editing. This may affect gene expression and function in a number of ways that include mRNA translation by changing codons and hence the amino acid sequence of proteins; pre-mRNA splicing by altering splice site recognition sequences; RNA stability by changing sequences involved in nuclease recognition; genetic stability in the case of RNA virus genomes by changing sequences during viral RNA replication; and RNA structure-dependent activities such as microRNA production or targeting or protein-RNA interactions. Can edit both viral and cellular RNAs and can edit RNAs at multiple sites (hyper-editing) or at specific sites (site-specific editing). Its cellular RNA substrates include: bladder cancer-associated protein (BLCAP), neurotransmitter receptors for glutamate (GRIA2 and GRIK2) and serotonin (HTR2C), GABA receptor (GABRA3) and potassium voltage-gated channel (KCNA1). Site-specific RNA editing of transcripts encoding these proteins results in amino acid substitutions which consequently alter their functional activities. Edits GRIA2 at both the Q/R and R/G sites efficiently but converts the adenosine in hotspot1 much less efficiently. Can exert a proviral effect towards human immunodeficiency virus type 1 (HIV-1) and enhances its replication via both an editing-dependent and editing-independent mechanism. The former involves editing of adenosines in the 5'UTR while the latter occurs via suppression of EIF2AK2/PKR activation and function. Can inhibit cell proliferation and migration and can stimulate exocytosis. Has a lower catalytic activity than isoform 2. Its function is as follows. Has a higher catalytic activity than isoform 1. This Homo sapiens (Human) protein is Double-stranded RNA-specific editase 1.